The sequence spans 567 residues: Adenine deaminase 2 (567 aa).

This sequence belongs to the metallo-dependent hydrolases superfamily. Adenine deaminase family. Mn(2+) is required as a cofactor.

The catalysed reaction is adenine + H2O + H(+) = hypoxanthine + NH4(+). This Oenococcus oeni (strain ATCC BAA-331 / PSU-1) protein is Adenine deaminase 2.